The primary structure comprises 297 residues: Protoheme IX farnesyltransferase (297 aa).

The next 9 membrane-spanning stretches (helical) occupy residues 12-32, 36-56, 85-105, 108-128, 133-153, 163-183, 209-229, 230-250, and 266-286; these read PGII…AAKG, YALF…GCVF, VSLV…YLAA, LAMW…SLYM, VYGT…GYCA, LILL…IAIF, ITLY…SGYA, GYKY…MALQ, and FIFS…DFMV.

Belongs to the UbiA prenyltransferase family. Protoheme IX farnesyltransferase subfamily.

The protein resides in the cell inner membrane. It carries out the reaction heme b + (2E,6E)-farnesyl diphosphate + H2O = Fe(II)-heme o + diphosphate. It functions in the pathway porphyrin-containing compound metabolism; heme O biosynthesis; heme O from protoheme: step 1/1. Functionally, converts heme B (protoheme IX) to heme O by substitution of the vinyl group on carbon 2 of heme B porphyrin ring with a hydroxyethyl farnesyl side group. The protein is Protoheme IX farnesyltransferase of Sodalis glossinidius (strain morsitans).